The chain runs to 142 residues: Large ribosomal subunit protein uL13 (142 aa).

This sequence belongs to the universal ribosomal protein uL13 family. As to quaternary structure, part of the 50S ribosomal subunit.

In terms of biological role, this protein is one of the early assembly proteins of the 50S ribosomal subunit, although it is not seen to bind rRNA by itself. It is important during the early stages of 50S assembly. The polypeptide is Large ribosomal subunit protein uL13 (Ruthia magnifica subsp. Calyptogena magnifica).